The following is a 352-amino-acid chain: Fe(3+) ions import ATP-binding protein FbpC (352 aa).

Positions 5–239 constitute an ABC transporter domain; it reads LHIGHLSKSF…PADLDAALFI (235 aa). Residue 37-44 coordinates ATP; it reads GASGCGKT.

It belongs to the ABC transporter superfamily. Fe(3+) ion importer (TC 3.A.1.10) family. As to quaternary structure, the complex is composed of two ATP-binding proteins (FbpC), two transmembrane proteins (FbpB) and a solute-binding protein (FbpA).

It is found in the cell inner membrane. The catalysed reaction is Fe(3+)(out) + ATP + H2O = Fe(3+)(in) + ADP + phosphate + H(+). Part of the ABC transporter complex FbpABC involved in Fe(3+) ions import. Responsible for energy coupling to the transport system. The sequence is that of Fe(3+) ions import ATP-binding protein FbpC from Neisseria meningitidis serogroup A / serotype 4A (strain DSM 15465 / Z2491).